We begin with the raw amino-acid sequence, 120 residues long: Large ribosomal subunit protein uL22 (120 aa).

A disordered region spans residues 1–20; sequence MFVNRRYTARGKNLPSSPKK.

It belongs to the universal ribosomal protein uL22 family. Part of the 50S ribosomal subunit.

This protein binds specifically to 23S rRNA; its binding is stimulated by other ribosomal proteins, e.g. L4, L17, and L20. It is important during the early stages of 50S assembly. It makes multiple contacts with different domains of the 23S rRNA in the assembled 50S subunit and ribosome. Its function is as follows. The globular domain of the protein is located near the polypeptide exit tunnel on the outside of the subunit, while an extended beta-hairpin is found that lines the wall of the exit tunnel in the center of the 70S ribosome. This is Large ribosomal subunit protein uL22 from Borrelia hermsii (strain HS1 / DAH).